The primary structure comprises 194 residues: dTTP/UTP pyrophosphatase (194 aa).

The active-site Proton acceptor is the D76.

It belongs to the Maf family. YhdE subfamily. It depends on a divalent metal cation as a cofactor.

It localises to the cytoplasm. It carries out the reaction dTTP + H2O = dTMP + diphosphate + H(+). The enzyme catalyses UTP + H2O = UMP + diphosphate + H(+). Functionally, nucleoside triphosphate pyrophosphatase that hydrolyzes dTTP and UTP. May have a dual role in cell division arrest and in preventing the incorporation of modified nucleotides into cellular nucleic acids. The polypeptide is dTTP/UTP pyrophosphatase (Shewanella sp. (strain MR-7)).